The following is a 316-amino-acid chain: Mycothiol acetyltransferase (316 aa).

N-acetyltransferase domains are found at residues 16-153 (REVR…VPAV) and 156-316 (VRIR…PAAN). A 1D-myo-inositol 2-(L-cysteinylamino)-2-deoxy-alpha-D-glucopyranoside-binding site is contributed by Glu-36. Acetyl-CoA contacts are provided by residues 83-85 (LVV) and 91-96 (RRGIGS). The 1D-myo-inositol 2-(L-cysteinylamino)-2-deoxy-alpha-D-glucopyranoside site is built by Glu-183, Lys-228, and Glu-238. Acetyl-CoA is bound by residues 242–244 (VGV) and 249–255 (QGRGLGQ). Tyr-283 contacts 1D-myo-inositol 2-(L-cysteinylamino)-2-deoxy-alpha-D-glucopyranoside. Residue 288-293 (NVAAVR) participates in acetyl-CoA binding.

It belongs to the acetyltransferase family. MshD subfamily. As to quaternary structure, monomer.

It carries out the reaction 1D-myo-inositol 2-(L-cysteinylamino)-2-deoxy-alpha-D-glucopyranoside + acetyl-CoA = mycothiol + CoA + H(+). Its function is as follows. Catalyzes the transfer of acetyl from acetyl-CoA to desacetylmycothiol (Cys-GlcN-Ins) to form mycothiol. The polypeptide is Mycothiol acetyltransferase (Mycolicibacterium paratuberculosis (strain ATCC BAA-968 / K-10) (Mycobacterium paratuberculosis)).